A 513-amino-acid polypeptide reads, in one-letter code: ATP synthase subunit alpha (513 aa).

Residue 169-176 participates in ATP binding; sequence GDRQTGKT.

It belongs to the ATPase alpha/beta chains family. As to quaternary structure, F-type ATPases have 2 components, CF(1) - the catalytic core - and CF(0) - the membrane proton channel. CF(1) has five subunits: alpha(3), beta(3), gamma(1), delta(1), epsilon(1). CF(0) has three main subunits: a(1), b(2) and c(9-12). The alpha and beta chains form an alternating ring which encloses part of the gamma chain. CF(1) is attached to CF(0) by a central stalk formed by the gamma and epsilon chains, while a peripheral stalk is formed by the delta and b chains.

The protein localises to the cell inner membrane. It carries out the reaction ATP + H2O + 4 H(+)(in) = ADP + phosphate + 5 H(+)(out). In terms of biological role, produces ATP from ADP in the presence of a proton gradient across the membrane. The alpha chain is a regulatory subunit. This chain is ATP synthase subunit alpha, found in Ralstonia pickettii (strain 12J).